The following is a 299-amino-acid chain: tRNA dimethylallyltransferase (299 aa).

Residue 13–20 participates in ATP binding; the sequence is GPTASGKT. Residue 15–20 coordinates substrate; sequence TASGKT. The interval 38–41 is interaction with substrate tRNA; it reads DSRQ.

This sequence belongs to the IPP transferase family. Monomer. Mg(2+) serves as cofactor.

It catalyses the reaction adenosine(37) in tRNA + dimethylallyl diphosphate = N(6)-dimethylallyladenosine(37) in tRNA + diphosphate. Functionally, catalyzes the transfer of a dimethylallyl group onto the adenine at position 37 in tRNAs that read codons beginning with uridine, leading to the formation of N6-(dimethylallyl)adenosine (i(6)A). The sequence is that of tRNA dimethylallyltransferase from Prochlorococcus marinus (strain SARG / CCMP1375 / SS120).